Here is a 548-residue protein sequence, read N- to C-terminus: Terpene synthase 1 (548 aa).

4 residues coordinate Mg(2+): D301, D305, D445, and E453. Residues 301–305 (DDTYD) carry the DDXXD motif motif.

The protein belongs to the terpene synthase family. Tpsa subfamily. It depends on Mg(2+) as a cofactor. Mn(2+) is required as a cofactor.

It carries out the reaction (2E,6E)-farnesyl diphosphate = (+)-valencene + diphosphate. Its pathway is secondary metabolite biosynthesis; terpenoid biosynthesis. Functionally, sesquiterpene synthase involved in the biosynthesis of volatile compounds which contribute to fruit flavor and aroma. Mediates the conversion of (2E,6E)-farnesyl diphosphate (FPP) into (+)-valencene. No activity detected with geranyl diphosphate (GPP). The polypeptide is Terpene synthase 1 (Citrus sinensis (Sweet orange)).